A 288-amino-acid chain; its full sequence is N(1)-aminopropylagmatine ureohydrolase (288 aa).

His-114, Asp-133, His-135, Asp-137, Asp-213, and Asp-215 together coordinate Mn(2+).

The protein belongs to the arginase family. The cofactor is Mn(2+).

Its subcellular location is the cytoplasm. It catalyses the reaction N(1)-(3-aminopropyl)agmatine + H2O = urea + spermidine. It carries out the reaction agmatine + H2O = urea + putrescine. It participates in amine and polyamine biosynthesis; spermidine biosynthesis. In terms of biological role, involved in the biosynthesis of polyamines which are thought to support the growth of thermophilic microorganisms under high-temperature conditions. It seems that long-chain and branched-chain of polyamines effectively stabilize DNA and RNA, respectively. Catalyzes the decarboxylation of N1-(3-aminopropyl)agmatine to yield spermidine and urea. It can also use agmatine to yield putrescine. This chain is N(1)-aminopropylagmatine ureohydrolase, found in Thermococcus kodakarensis (strain ATCC BAA-918 / JCM 12380 / KOD1) (Pyrococcus kodakaraensis (strain KOD1)).